The sequence spans 830 residues: Heavy metal tolerance protein (830 aa).

The N-terminal stretch at 1–27 (MVLRYNSPRLNILELVLLYVGFFSIGS) is a signal peptide. 3 consecutive transmembrane segments (helical) span residues 51–71 (PIGI…VDIS), 88–108 (TTVV…ISCA), and 126–146 (LSVL…IVYS). An N-linked (GlcNAc...) asparagine glycan is attached at Asn-150. 3 helical membrane-spanning segments follow: residues 156-176 (IVLA…AIYL), 263-283 (FQIF…ILAP), and 304-324 (DVIL…IGSL). The 286-residue stretch at 265–550 (IFICIVLLFL…FGTLYRSLQN (286 aa)) folds into the ABC transmembrane type-1 domain. Asn-350 carries an N-linked (GlcNAc...) asparagine glycan. Helical transmembrane passes span 381–401 (VVFQ…YFFI) and 403–423 (FDIY…YVTV). Glutathione-binding positions include 429–433 (RTEAR), 492–495 (NIVQ), and Gly-542. A helical membrane pass occupies residues 490–511 (FLNIVQGGIFTFSLAIACLLSA). The ABC transporter domain occupies 584-818 (VIFSHVSFAY…DGGAYKKMWF (235 aa)). Residues Tyr-593 and 617–628 (GESGGGKSTIMR) each bind ATP.

The protein belongs to the ABC transporter superfamily. ABCB family. Heavy Metal importer (TC 3.A.1.210) subfamily.

The protein resides in the vacuole membrane. Its function is as follows. Involved in metal tolerance. Probably involved in the transport of metal-bound phytochelatins. Compartmentalizes cadmium within vacuoles, thereby protecting cells from cadmium toxicity. The polypeptide is Heavy metal tolerance protein (hmt1) (Schizosaccharomyces pombe (strain 972 / ATCC 24843) (Fission yeast)).